The following is a 120-amino-acid chain: Large ribosomal subunit protein uL18 (120 aa).

It belongs to the universal ribosomal protein uL18 family. Part of the 50S ribosomal subunit; part of the 5S rRNA/L5/L18/L25 subcomplex. Contacts the 5S and 23S rRNAs.

This is one of the proteins that bind and probably mediate the attachment of the 5S RNA into the large ribosomal subunit, where it forms part of the central protuberance. This Agrobacterium fabrum (strain C58 / ATCC 33970) (Agrobacterium tumefaciens (strain C58)) protein is Large ribosomal subunit protein uL18.